Reading from the N-terminus, the 233-residue chain is MAKLTKRARLIREKVEATKSYDINEAVALLKELATAKFLESVDVAVNLGVDPRKSDQNVRGATVLPHGTGRDVRVAVFTQGANAEAAKEAGAELVGMDELAAQIKAGEMNFDVVIASPDAMRVVGMLGQILGPRGLMPNPKTGTVTPNVAEAVKNAKAGQVRYRNDKNGIIHTTIGKVDFEPAQLKENLEALLGALKKAKPAAAKGVFIKKVSISTTMGAGVAVDQGTLEDAK.

The protein belongs to the universal ribosomal protein uL1 family. Part of the 50S ribosomal subunit.

Its function is as follows. Binds directly to 23S rRNA. The L1 stalk is quite mobile in the ribosome, and is involved in E site tRNA release. Protein L1 is also a translational repressor protein, it controls the translation of the L11 operon by binding to its mRNA. This Shewanella halifaxensis (strain HAW-EB4) protein is Large ribosomal subunit protein uL1.